We begin with the raw amino-acid sequence, 395 residues long: S-adenosylmethionine synthase (395 aa).

H18 contacts ATP. D20 contributes to the Mg(2+) binding site. K(+) is bound at residue E46. L-methionine is bound by residues E59 and Q103. The tract at residues 103 to 113 is flexible loop; that stretch reads QSADIAVGVDS. Residues 170–172, D244, 250–251, A267, and K271 contribute to the ATP site; these read DAK and RK. D244 contacts L-methionine. K275 lines the L-methionine pocket.

Belongs to the AdoMet synthase family. As to quaternary structure, homotetramer; dimer of dimers. It depends on Mg(2+) as a cofactor. K(+) is required as a cofactor.

It localises to the cytoplasm. It carries out the reaction L-methionine + ATP + H2O = S-adenosyl-L-methionine + phosphate + diphosphate. It participates in amino-acid biosynthesis; S-adenosyl-L-methionine biosynthesis; S-adenosyl-L-methionine from L-methionine: step 1/1. Its function is as follows. Catalyzes the formation of S-adenosylmethionine (AdoMet) from methionine and ATP. The overall synthetic reaction is composed of two sequential steps, AdoMet formation and the subsequent tripolyphosphate hydrolysis which occurs prior to release of AdoMet from the enzyme. This Gluconacetobacter diazotrophicus (strain ATCC 49037 / DSM 5601 / CCUG 37298 / CIP 103539 / LMG 7603 / PAl5) protein is S-adenosylmethionine synthase.